The primary structure comprises 429 residues: Fez family zinc finger protein 1 (429 aa).

An Engrailed homology 1 repressor motif is present at residues 29–44; it reads PLAFSIERIMARTPEP. 6 consecutive C2H2-type zinc fingers follow at residues 247-269, 275-297, 303-325, 331-353, 359-381, and 387-410; these read FTCE…MPVH, FVCK…KIIH, HKCN…TRIH, FICE…KLTH, FKCN…MHTH, and FTCP…RKLH. Positions 409–429 are disordered; it reads LHDISPGPHSPPTPTGNTEGQ.

This sequence belongs to the krueppel C2H2-type zinc-finger protein family.

It is found in the nucleus. In terms of biological role, transcription repressor. Involved in the development of the forebrain region. This Danio rerio (Zebrafish) protein is Fez family zinc finger protein 1 (fezf1).